Reading from the N-terminus, the 375-residue chain is DNA replication and repair protein RecF (375 aa).

30-37 (GENAQGKT) contacts ATP.

This sequence belongs to the RecF family.

The protein localises to the cytoplasm. Its function is as follows. The RecF protein is involved in DNA metabolism; it is required for DNA replication and normal SOS inducibility. RecF binds preferentially to single-stranded, linear DNA. It also seems to bind ATP. The protein is DNA replication and repair protein RecF of Enterococcus faecalis (strain ATCC 700802 / V583).